The chain runs to 327 residues: Phenylalanine--tRNA ligase alpha subunit (327 aa).

Mg(2+) is bound at residue E252.

This sequence belongs to the class-II aminoacyl-tRNA synthetase family. Phe-tRNA synthetase alpha subunit type 1 subfamily. Tetramer of two alpha and two beta subunits. Requires Mg(2+) as cofactor.

Its subcellular location is the cytoplasm. The enzyme catalyses tRNA(Phe) + L-phenylalanine + ATP = L-phenylalanyl-tRNA(Phe) + AMP + diphosphate + H(+). The chain is Phenylalanine--tRNA ligase alpha subunit from Aeromonas hydrophila subsp. hydrophila (strain ATCC 7966 / DSM 30187 / BCRC 13018 / CCUG 14551 / JCM 1027 / KCTC 2358 / NCIMB 9240 / NCTC 8049).